A 170-amino-acid polypeptide reads, in one-letter code: Peptide deformylase (170 aa).

2 residues coordinate Fe cation: Cys-91 and His-133. The active site involves Glu-134. His-137 is a binding site for Fe cation.

This sequence belongs to the polypeptide deformylase family. The cofactor is Fe(2+).

The catalysed reaction is N-terminal N-formyl-L-methionyl-[peptide] + H2O = N-terminal L-methionyl-[peptide] + formate. Its function is as follows. Removes the formyl group from the N-terminal Met of newly synthesized proteins. Requires at least a dipeptide for an efficient rate of reaction. N-terminal L-methionine is a prerequisite for activity but the enzyme has broad specificity at other positions. The protein is Peptide deformylase of Aeromonas salmonicida (strain A449).